We begin with the raw amino-acid sequence, 329 residues long: Adenylate isopentenyltransferase (329 aa).

ATP is bound by residues 37–44, Lys-63, Thr-74, 129–131, 220–222, and Lys-313; these read GATGTGKS, SNS, and KAI.

Belongs to the IPP transferase family. Mg(2+) is required as a cofactor. In terms of tissue distribution, expressed in roots, stems, leaves and cones.

It catalyses the reaction dimethylallyl diphosphate + AMP = N(6)-(dimethylallyl)adenosine 5'-phosphate + diphosphate. It carries out the reaction dimethylallyl diphosphate + ADP = N(6)-(dimethylallyl)adenosine 5'-diphosphate + diphosphate. The enzyme catalyses dimethylallyl diphosphate + ATP = N(6)-(dimethylallyl)adenosine 5'-triphosphate + diphosphate. In terms of biological role, involved in cytokinin biosynthesis. Catalyzes the transfer of an isopentenyl group from dimethylallyl diphosphate (DMAPP) to ATP, ADP and AMP. GMP, IMP, CMP or UMP are not used as substrates. The chain is Adenylate isopentenyltransferase from Humulus lupulus (European hop).